The primary structure comprises 137 residues: Large-conductance mechanosensitive channel (137 aa).

Topologically, residues 1–16 (MSIIKEFREFAMRGNV) are cytoplasmic. Residues 17–45 (VDLAVGVIIGALFGKIVSSLVSDIIMPPL) traverse the membrane as a helical segment. Topologically, residues 46–74 (GLLIGGVDFKQFALFLRNAQGGIPAVVMN) are periplasmic. The chain crosses the membrane as a helical span at residues 75 to 94 (YGAFIQNIFDFIIVAFAIFI). Topologically, residues 95–137 (AIKLMNKMRCKQEDTPAAPPKPSAEEKLLAEIRDLLKEQQTRQ) are cytoplasmic.

The protein belongs to the MscL family. Homopentamer.

The protein resides in the cell inner membrane. In terms of biological role, channel that opens in response to stretch forces in the membrane lipid bilayer. Forms a nonselective ion channel with a conductance of about 4 nanosiemens. May participate in the regulation of osmotic pressure changes within the cell. This chain is Large-conductance mechanosensitive channel, found in Pectobacterium carotovorum (Erwinia carotovora).